Reading from the N-terminus, the 239-residue chain is MNPELFAETLSKYNFKLSPVQEQQFKTYFKELVRVNEHVNLTRITDEDEVYLKHFYDSVTPLLLWPEVFAEGAKLCDVGAGAGFPSLPIKILRPDLEVTIVDSLGKRLNFLSDLLEKLGIEGVNLVHGRAEDVGQNPDYREKFDLVTARAVARMSVLSEYCLPLAKVGGKFLALKGPRADEELEDAKSALEKLGGEVVFTRVITLPGSAEVRTLVLVDKVKATPGKYPRQAGTPNRKPL.

Residues Gly79, Phe84, 130 to 131 (AE), and Arg149 each bind S-adenosyl-L-methionine.

Belongs to the methyltransferase superfamily. RNA methyltransferase RsmG family.

The protein resides in the cytoplasm. Specifically methylates the N7 position of a guanine in 16S rRNA. This is Ribosomal RNA small subunit methyltransferase G from Lactobacillus delbrueckii subsp. bulgaricus (strain ATCC BAA-365 / Lb-18).